Consider the following 153-residue polypeptide: UPF0756 membrane protein lin1603 (153 aa).

4 consecutive transmembrane segments (helical) span residues 6 to 26 (MLFL…SLII), 54 to 74 (WGVT…QIGF), 80 to 100 (SFKS…SILA), and 117 to 137 (LVFG…GPVI).

The protein belongs to the UPF0756 family.

The protein localises to the cell membrane. This Listeria innocua serovar 6a (strain ATCC BAA-680 / CLIP 11262) protein is UPF0756 membrane protein lin1603.